The primary structure comprises 179 residues: Bifunctional protein PyrR (179 aa).

Positions 99–111 match the PRPP-binding motif; it reads VILVDDVLYTGRT.

It belongs to the purine/pyrimidine phosphoribosyltransferase family. PyrR subfamily. In terms of assembly, homodimer and homohexamer; in equilibrium.

The enzyme catalyses UMP + diphosphate = 5-phospho-alpha-D-ribose 1-diphosphate + uracil. Functionally, regulates transcriptional attenuation of the pyrimidine nucleotide (pyr) operon by binding in a uridine-dependent manner to specific sites on pyr mRNA. This disrupts an antiterminator hairpin in the RNA and favors formation of a downstream transcription terminator, leading to a reduced expression of downstream genes. In terms of biological role, also displays a weak uracil phosphoribosyltransferase activity which is not physiologically significant. The sequence is that of Bifunctional protein PyrR from Limosilactobacillus fermentum (strain NBRC 3956 / LMG 18251) (Lactobacillus fermentum).